Reading from the N-terminus, the 313-residue chain is uncharacterized protein (313 aa).

Residues 2–57 form the HTH deoR-type domain; sequence KLERLLAMVVLLISKKQVQAAELAELFEVSVRTIYRDIETINRAGIPIVTSQGSGG. The segment at residues 19–38 is a DNA-binding region (H-T-H motif); that stretch reads VQAAELAELFEVSVRTIYRD. In terms of domain architecture, WYL spans 131–210; the sequence is HTEDQKTLRE…KDLAILHQTF (80 aa).

The protein resides in the cytoplasm. This is an uncharacterized protein from Bacillus subtilis (strain 168).